The primary structure comprises 469 residues: 3-isopropylmalate dehydratase large subunit (469 aa).

Residues cysteine 349, cysteine 410, and cysteine 413 each contribute to the [4Fe-4S] cluster site.

The protein belongs to the aconitase/IPM isomerase family. LeuC type 1 subfamily. In terms of assembly, heterodimer of LeuC and LeuD. It depends on [4Fe-4S] cluster as a cofactor.

The enzyme catalyses (2R,3S)-3-isopropylmalate = (2S)-2-isopropylmalate. The protein operates within amino-acid biosynthesis; L-leucine biosynthesis; L-leucine from 3-methyl-2-oxobutanoate: step 2/4. In terms of biological role, catalyzes the isomerization between 2-isopropylmalate and 3-isopropylmalate, via the formation of 2-isopropylmaleate. This is 3-isopropylmalate dehydratase large subunit from Neisseria gonorrhoeae (strain NCCP11945).